The sequence spans 232 residues: MAHLILIRHGQSLWNAANKFTGWVDVPLSERGRAEATIASCKLRDYRVNVCFTSMLMRAIETAVITLTECDDICGGKIPIIKHEADDENWHGWDNYDGDPAAELPIYPTATLDERYYGDLQGLDKAETTAKYGKEQVQIWRRSYSVRPPGGESLEDTRKRVYPYFTNRILGHIKQGDNVLVAAHGNSLRSIIMILETLSEEEVPKVELATGVPIVYELDKAAHMLSKAVLTN.

Substrate is bound by residues 8–15 (RHGQSLWN), 21–22 (TG), Arg58, 114–117 (ERYY), Lys125, 141–142 (RR), and 185–186 (GN). His9 acts as the Tele-phosphohistidine intermediate in catalysis. Glu114 serves as the catalytic Proton donor/acceptor.

It belongs to the phosphoglycerate mutase family. BPG-dependent PGAM subfamily.

The enzyme catalyses (2R)-2-phosphoglycerate = (2R)-3-phosphoglycerate. It functions in the pathway carbohydrate degradation; glycolysis; pyruvate from D-glyceraldehyde 3-phosphate: step 3/5. Catalyzes the interconversion of 2-phosphoglycerate and 3-phosphoglycerate. This Gloeobacter violaceus (strain ATCC 29082 / PCC 7421) protein is 2,3-bisphosphoglycerate-dependent phosphoglycerate mutase 1.